The following is a 221-amino-acid chain: Cytidylate kinase (221 aa).

7-15 serves as a coordination point for ATP; sequence GPSASGKSS.

Belongs to the cytidylate kinase family. Type 1 subfamily.

It is found in the cytoplasm. The catalysed reaction is CMP + ATP = CDP + ADP. It carries out the reaction dCMP + ATP = dCDP + ADP. The sequence is that of Cytidylate kinase from Borreliella burgdorferi (strain ZS7) (Borrelia burgdorferi).